The following is a 376-amino-acid chain: 23S rRNA (uracil(747)-C(5))-methyltransferase RlmC (376 aa).

Cys-3, Cys-11, Cys-14, and Cys-88 together coordinate [4Fe-4S] cluster. 4 residues coordinate S-adenosyl-L-methionine: Gln-213, Phe-242, Glu-263, and Asn-308. Cys-335 serves as the catalytic Nucleophile.

It belongs to the class I-like SAM-binding methyltransferase superfamily. RNA M5U methyltransferase family. RlmC subfamily.

The catalysed reaction is uridine(747) in 23S rRNA + S-adenosyl-L-methionine = 5-methyluridine(747) in 23S rRNA + S-adenosyl-L-homocysteine + H(+). Catalyzes the formation of 5-methyl-uridine at position 747 (m5U747) in 23S rRNA. The protein is 23S rRNA (uracil(747)-C(5))-methyltransferase RlmC of Vibrio vulnificus (strain CMCP6).